A 100-amino-acid polypeptide reads, in one-letter code: Integration host factor subunit alpha (100 aa).

Positions 54–73 (DLRDKRQRPGRNPKTGEEIP) are disordered.

The protein belongs to the bacterial histone-like protein family. In terms of assembly, heterodimer of an alpha and a beta chain.

This protein is one of the two subunits of integration host factor, a specific DNA-binding protein that functions in genetic recombination as well as in transcriptional and translational control. This Pseudomonas savastanoi pv. phaseolicola (strain 1448A / Race 6) (Pseudomonas syringae pv. phaseolicola (strain 1448A / Race 6)) protein is Integration host factor subunit alpha.